A 465-amino-acid polypeptide reads, in one-letter code: Putative subtilisin-like proteinase 1 (465 aa).

Residues 1–17 (MILAIISLSVVICREVS) form the signal peptide. The 72-residue stretch at 19–90 (YIVMFDQDPS…VKMVVKDSPV (72 aa)) folds into the Inhibitor I9 domain. The 333-residue stretch at 115–447 (PWGLARVGGS…PSLFNANKKK (333 aa)) folds into the Peptidase S8 domain. Residues Asp-148 and His-180 each act as charge relay system in the active site. Cys-329 and Cys-360 are joined by a disulfide. Ser-386 acts as the Charge relay system in catalysis.

This sequence belongs to the peptidase S8 family.

Its subcellular location is the secreted. It localises to the extracellular space. Functionally, may be involved in the degradation of proteins for nutrient acquisition or possess a regulatory function by proteolytic activation of proproteins. This chain is Putative subtilisin-like proteinase 1 (SPL1), found in Encephalitozoon cuniculi (strain GB-M1) (Microsporidian parasite).